The following is a 236-amino-acid chain: Large ribosomal subunit protein uL1 (236 aa).

Belongs to the universal ribosomal protein uL1 family. In terms of assembly, part of the 50S ribosomal subunit.

Binds directly to 23S rRNA. The L1 stalk is quite mobile in the ribosome, and is involved in E site tRNA release. Functionally, protein L1 is also a translational repressor protein, it controls the translation of the L11 operon by binding to its mRNA. In Corynebacterium jeikeium (strain K411), this protein is Large ribosomal subunit protein uL1.